The primary structure comprises 190 residues: Threonylcarbamoyl-AMP synthase (190 aa).

The 184-residue stretch at 7 to 190 (SQDVASLVIA…ALSGELIRQG (184 aa)) folds into the YrdC-like domain.

Belongs to the SUA5 family. TsaC subfamily.

Its subcellular location is the cytoplasm. It carries out the reaction L-threonine + hydrogencarbonate + ATP = L-threonylcarbamoyladenylate + diphosphate + H2O. In terms of biological role, required for the formation of a threonylcarbamoyl group on adenosine at position 37 (t(6)A37) in tRNAs that read codons beginning with adenine. Catalyzes the conversion of L-threonine, HCO(3)(-)/CO(2) and ATP to give threonylcarbamoyl-AMP (TC-AMP) as the acyladenylate intermediate, with the release of diphosphate. The chain is Threonylcarbamoyl-AMP synthase from Sodalis glossinidius (strain morsitans).